The sequence spans 283 residues: MKQYLELCQRIIDEGTWVENSRTGKRCLTVINADLVYHVDKNEFPLITTRKSFWKAAIAEMLGYIRGYDNAADFRNIGAKTWDANANDNQAWLNNPHRKGADDMGRVYGVQGRGWSKPDGGSIDQLRKIVDNLSKGIDDRGEILSFYNPGEFHMGCLRPCMHTHNFSLLGDTLHLTSFQRSCDVPLGLNFNQVQVFTLLALIAQITGHKAGTAYHKIVNAHIYEDQLELMQSVQLKRSPFPSPQLSINPDIKSLEDLETWVTMDDFEVTGYEHHEGIRYPFSV.

A dUMP-binding site is contributed by R22. The Nucleophile role is filled by C160. DUMP is bound by residues 180–183 (RSCD), N191, and 221–223 (HIY). Position 183 (D183) interacts with (6R)-5,10-methylene-5,6,7,8-tetrahydrofolate. (6R)-5,10-methylene-5,6,7,8-tetrahydrofolate is bound at residue S282.

Belongs to the thymidylate synthase family. Bacterial-type ThyA subfamily. As to quaternary structure, homodimer.

Its subcellular location is the cytoplasm. The enzyme catalyses dUMP + (6R)-5,10-methylene-5,6,7,8-tetrahydrofolate = 7,8-dihydrofolate + dTMP. It participates in pyrimidine metabolism; dTTP biosynthesis. Functionally, catalyzes the reductive methylation of 2'-deoxyuridine-5'-monophosphate (dUMP) to 2'-deoxythymidine-5'-monophosphate (dTMP) while utilizing 5,10-methylenetetrahydrofolate (mTHF) as the methyl donor and reductant in the reaction, yielding dihydrofolate (DHF) as a by-product. This enzymatic reaction provides an intracellular de novo source of dTMP, an essential precursor for DNA biosynthesis. The polypeptide is Thymidylate synthase (Shewanella piezotolerans (strain WP3 / JCM 13877)).